Reading from the N-terminus, the 248-residue chain is PF03932 family protein CutC (248 aa).

It belongs to the CutC family. As to quaternary structure, homodimer.

The protein resides in the cytoplasm. The protein is PF03932 family protein CutC of Escherichia coli (strain 55989 / EAEC).